The following is a 151-amino-acid chain: Guanylate kinase homolog (151 aa).

The Guanylate kinase-like domain maps to 1–141; that stretch reads MEREGVDYHY…AYSKLIQILQ (141 aa).

It belongs to the guanylate kinase family.

In Bos taurus (Bovine), this protein is Guanylate kinase homolog.